Consider the following 158-residue polypeptide: Transcription elongation factor GreA (158 aa).

Residues 47 to 74 (NSEYDEAKNEQAFTEGRIIQLENMLKNA) are a coiled coil.

The protein belongs to the GreA/GreB family.

Necessary for efficient RNA polymerase transcription elongation past template-encoded arresting sites. The arresting sites in DNA have the property of trapping a certain fraction of elongating RNA polymerases that pass through, resulting in locked ternary complexes. Cleavage of the nascent transcript by cleavage factors such as GreA or GreB allows the resumption of elongation from the new 3'terminus. GreA releases sequences of 2 to 3 nucleotides. The polypeptide is Transcription elongation factor GreA (Clostridium perfringens (strain ATCC 13124 / DSM 756 / JCM 1290 / NCIMB 6125 / NCTC 8237 / Type A)).